Here is a 392-residue protein sequence, read N- to C-terminus: Formate-dependent phosphoribosylglycinamide formyltransferase (392 aa).

Residues glutamate 22–leucine 23 and glutamate 82 each bind N(1)-(5-phospho-beta-D-ribosyl)glycinamide. Residues arginine 114, lysine 155, serine 160–glutamine 165, glutamate 195–valine 198, and glutamate 203 each bind ATP. The region spanning arginine 119–leucine 308 is the ATP-grasp domain. Glutamate 267 and glutamate 279 together coordinate Mg(2+). N(1)-(5-phospho-beta-D-ribosyl)glycinamide-binding positions include aspartate 286, lysine 355, and arginine 362–arginine 363.

This sequence belongs to the PurK/PurT family. In terms of assembly, homodimer.

It carries out the reaction N(1)-(5-phospho-beta-D-ribosyl)glycinamide + formate + ATP = N(2)-formyl-N(1)-(5-phospho-beta-D-ribosyl)glycinamide + ADP + phosphate + H(+). It functions in the pathway purine metabolism; IMP biosynthesis via de novo pathway; N(2)-formyl-N(1)-(5-phospho-D-ribosyl)glycinamide from N(1)-(5-phospho-D-ribosyl)glycinamide (formate route): step 1/1. Its function is as follows. Involved in the de novo purine biosynthesis. Catalyzes the transfer of formate to 5-phospho-ribosyl-glycinamide (GAR), producing 5-phospho-ribosyl-N-formylglycinamide (FGAR). Formate is provided by PurU via hydrolysis of 10-formyl-tetrahydrofolate. In Salmonella paratyphi A (strain ATCC 9150 / SARB42), this protein is Formate-dependent phosphoribosylglycinamide formyltransferase.